The sequence spans 540 residues: MLO protein homolog 1 (540 aa).

Residues 1 to 16 (MAGGRSGSRELPETPT) lie on the Extracellular side of the membrane. A helical membrane pass occupies residues 17–37 (WAVAVVCAVLVLVSAAMEHGL). The Cytoplasmic segment spans residues 38–60 (HNLSHWFRRRQKKAMGDALDKIK). The helical transmembrane segment at 61–81 (AELMLLGFISLLLTVAQAPIS) threads the bilayer. The Extracellular portion of the chain corresponds to 82–142 (KICIPKSAAN…MSAKSMHQLH (61 aa)). Residues 143–163 (IFIFVLAVFHVTYCIITMGLG) form a helical membrane-spanning segment. The Cytoplasmic segment spans residues 164 to 265 (RLKMKKWKKW…IKRSLEDDFK (102 aa)). Residues 266-286 (VVVGISLPLWFVGILVLFLDI) form a helical membrane-spanning segment. A topological domain (extracellular) is located at residue histidine 287. The chain crosses the membrane as a helical span at residues 288–308 (GLGTLIWISFVPLIIVLLVGT). Residues 309-347 (KLEMVIMEMAQEIQDRATVIQGAPMVEPSNKYFWFNRPD) lie on the Cytoplasmic side of the membrane. A helical transmembrane segment spans residues 348–368 (WVLFFIHLTLFHNAFQMAHFV). Residues 369–383 (WTMATPGLKKCFHEN) are Extracellular-facing. A helical transmembrane segment spans residues 384–404 (IWLSIVEVIVGISLQVLCSYI). Residues 405–540 (TFPLYALVTQ…DSDFSFSAQR (136 aa)) are Cytoplasmic-facing. Residues 426–447 (EQTMKALMNWRKKAMEKKKVRD) are calmodulin-binding. The disordered stretch occupies residues 468-526 (ASPVHLLQDHRARSDDPPSPITVASPPAPEEDMYPVPAAAASRQLLDDPPDRRWMASSS). Composition is skewed to basic and acidic residues over residues 474–483 (LQDHRARSDD) and 512–521 (LLDDPPDRRW).

This sequence belongs to the MLO family.

The protein localises to the membrane. Functionally, may be involved in modulation of pathogen defense and leaf cell death. Activity seems to be regulated by Ca(2+)-dependent calmodulin binding and seems not to require heterotrimeric G proteins. In Oryza sativa subsp. indica (Rice), this protein is MLO protein homolog 1 (MLO1).